The primary structure comprises 1463 residues: DNA-directed RNA polymerase subunit beta'' (1463 aa).

Positions 239, 312, 319, and 322 each coordinate Zn(2+). Disordered regions lie at residues 836–869 (TFTG…ETRM) and 987–1007 (TNRS…AQAR). Positions 860 to 869 (AANSSHETRM) are enriched in polar residues. The span at 987 to 996 (TNRSKTRRNA) shows a compositional bias: basic residues. Over residues 997-1007 (SGKTQVKAQAR) the composition is skewed to polar residues.

The protein belongs to the RNA polymerase beta' chain family. RpoC2 subfamily. In plastids the minimal PEP RNA polymerase catalytic core is composed of four subunits: alpha, beta, beta', and beta''. When a (nuclear-encoded) sigma factor is associated with the core the holoenzyme is formed, which can initiate transcription. Zn(2+) is required as a cofactor.

It is found in the plastid. It localises to the chloroplast. It catalyses the reaction RNA(n) + a ribonucleoside 5'-triphosphate = RNA(n+1) + diphosphate. In terms of biological role, DNA-dependent RNA polymerase catalyzes the transcription of DNA into RNA using the four ribonucleoside triphosphates as substrates. The protein is DNA-directed RNA polymerase subunit beta'' of Nephroselmis olivacea (Green alga).